Reading from the N-terminus, the 225-residue chain is NAD(P)H-hydrate epimerase (225 aa).

One can recognise a YjeF N-terminal domain in the interval Met9–Phe209. Asn57–Asp61 serves as a coordination point for (6S)-NADPHX. Residues Asn58 and Asp119 each contribute to the K(+) site. Residues Gly123–Leu129 and Asp152 contribute to the (6S)-NADPHX site. Residue Thr155 participates in K(+) binding.

Belongs to the NnrE/AIBP family. It depends on K(+) as a cofactor.

The catalysed reaction is (6R)-NADHX = (6S)-NADHX. The enzyme catalyses (6R)-NADPHX = (6S)-NADPHX. Catalyzes the epimerization of the S- and R-forms of NAD(P)HX, a damaged form of NAD(P)H that is a result of enzymatic or heat-dependent hydration. This is a prerequisite for the S-specific NAD(P)H-hydrate dehydratase to allow the repair of both epimers of NAD(P)HX. The sequence is that of NAD(P)H-hydrate epimerase from Leuconostoc kimchii (strain IMSNU 11154 / KCTC 2386 / IH25).